Here is a 351-residue protein sequence, read N- to C-terminus: Protein TBATA (351 aa).

Disordered stretches follow at residues 16-40 (KAELKLEKKSGRKPRSPRDSGPQKE), 167-186 (KKEKEQKEEPLREQGAKYSA), 195-216 (STRAVGRRRSHQGQQSQSSSRH), and 292-351 (EVHE…RAES). A compositionally biased stretch (basic and acidic residues) spans 167-181 (KKEKEQKEEPLREQG). 2 stretches are compositionally biased toward basic and acidic residues: residues 292–302 (EVHEPPQEKQE) and 340–351 (TEKKTSKPRAES).

It belongs to the TBATA family.

The protein localises to the cytoplasm. It is found in the cytosol. Functionally, may play a role in spermatid differentiation. Modulates thymic stromal cell proliferation and thymus function. This Homo sapiens (Human) protein is Protein TBATA (TBATA).